The following is a 130-amino-acid chain: Ribosome-binding factor A (130 aa).

This sequence belongs to the RbfA family. Monomer. Binds 30S ribosomal subunits, but not 50S ribosomal subunits or 70S ribosomes.

Its subcellular location is the cytoplasm. Its function is as follows. One of several proteins that assist in the late maturation steps of the functional core of the 30S ribosomal subunit. Associates with free 30S ribosomal subunits (but not with 30S subunits that are part of 70S ribosomes or polysomes). Required for efficient processing of 16S rRNA. May interact with the 5'-terminal helix region of 16S rRNA. In Prochlorococcus marinus (strain SARG / CCMP1375 / SS120), this protein is Ribosome-binding factor A.